The following is a 348-amino-acid chain: MTTIHNQSRKLLLQALRQGASDIHLSGTREDGIIQFRLNGRLAPFQRIPLQTAERLVSHFKFSAGLDIGERRKPQSGAMDLILEQKIPVSLRVSTLPTPLFEAVAIRLHPQQTPFALESIPLIKRQAQQLISLMTRTQGLILLTGATGSGKTTTLYAMLQKALHMQNLHIVTIEDPIEQLNPAFTQFEMNEKAQLTYEVGLKAALRHDPDVIMIGEIRDQTTAVYAVRAALTGHLVLATIHSANARGTITRLCEMGVALHDLREVVVAIIAQELISRKCPLCLSSDCSPYCTWLNNRKRAAIFDILEGKALQEALTANDSSFDGLGKERRFAIALGYIEEKEAKNRAL.

145–152 provides a ligand contact to ATP; it reads GATGSGKT.

Belongs to the GSP E family.

It is found in the cell membrane. In terms of biological role, required for uptake of DNA by competent cells. The polypeptide is Competence protein ComGA (comGA) (Halalkalibacterium halodurans (strain ATCC BAA-125 / DSM 18197 / FERM 7344 / JCM 9153 / C-125) (Bacillus halodurans)).